Reading from the N-terminus, the 319-residue chain is ATP-dependent 6-phosphofructokinase (319 aa).

Glycine 11 provides a ligand contact to ATP. 21–25 (RAVVR) contributes to the ADP binding site. ATP-binding positions include 72-73 (RC) and 102-105 (GDGS). Aspartate 103 serves as a coordination point for Mg(2+). Residue 125 to 127 (TID) coordinates substrate. The active-site Proton acceptor is aspartate 127. Residue arginine 154 participates in ADP binding. Substrate is bound by residues arginine 162 and 169–171 (MGR). ADP-binding positions include 185–187 (GAE), arginine 211, and 213–215 (KKH). Substrate is bound by residues glutamate 222, arginine 243, and 249 to 252 (HIQR).

This sequence belongs to the phosphofructokinase type A (PFKA) family. ATP-dependent PFK group I subfamily. Prokaryotic clade 'B1' sub-subfamily. In terms of assembly, homotetramer. Mg(2+) is required as a cofactor.

The protein resides in the cytoplasm. The enzyme catalyses beta-D-fructose 6-phosphate + ATP = beta-D-fructose 1,6-bisphosphate + ADP + H(+). The protein operates within carbohydrate degradation; glycolysis; D-glyceraldehyde 3-phosphate and glycerone phosphate from D-glucose: step 3/4. With respect to regulation, allosterically activated by ADP and other diphosphonucleosides, and allosterically inhibited by phosphoenolpyruvate. In terms of biological role, catalyzes the phosphorylation of D-fructose 6-phosphate to fructose 1,6-bisphosphate by ATP, the first committing step of glycolysis. The chain is ATP-dependent 6-phosphofructokinase from Shouchella clausii (strain KSM-K16) (Alkalihalobacillus clausii).